Reading from the N-terminus, the 829-residue chain is Colorectal mutant cancer protein (829 aa).

Disordered stretches follow at residues 114-139, 282-320, and 672-700; these read RSELSQSQHEVNEDSRSMDQDQTSVS, TRLQSVQATGPSSPGRLTSTNRPINPSTGELSTSSSSND, and EEQKEQRMRSLSSTSSGSKDKPGKECADA. The span at 123–132 shows a compositional bias: basic and acidic residues; sequence EVNEDSRSMD. Over residues 285-312 the composition is skewed to polar residues; it reads QSVQATGPSSPGRLTSTNRPINPSTGEL. The span at 689–698 shows a compositional bias: basic and acidic residues; the sequence is SKDKPGKECA. The short motif at 766 to 782 is the Nuclear localization signal element; the sequence is KRANSNLVAAYEKAKKK. The PDZ-binding motif lies at 826–829; that stretch reads ETSL. A Phosphoserine modification is found at Ser-828.

The protein belongs to the MCC family. In terms of assembly, interacts with SCRIB (via phosphorylated PDZ-binding motif), EZR, SNX27, NHERF1 and NHERF2. Interacts with CTNNB1; the interaction is enhanced upon Wnt stimulation. Interacts with MYH10. Interacts with CCAR2. In terms of tissue distribution, expressed in a variety of tissues.

The protein localises to the cell membrane. The protein resides in the cell projection. It localises to the lamellipodium. It is found in the nucleus. Its subcellular location is the cytoplasm. In terms of biological role, candidate for the putative colorectal tumor suppressor gene located at 5q21. Suppresses cell proliferation and the Wnt/b-catenin pathway in colorectal cancer cells. Inhibits DNA binding of b-catenin/TCF/LEF transcription factors. Involved in cell migration independently of RAC1, CDC42 and p21-activated kinase (PAK) activation. Represses the beta-catenin pathway (canonical Wnt signaling pathway) in a CCAR2-dependent manner by sequestering CCAR2 to the cytoplasm, thereby impairing its ability to inhibit SIRT1 which is involved in the deacetylation and negative regulation of beta-catenin (CTNB1) transcriptional activity. The polypeptide is Colorectal mutant cancer protein (MCC) (Homo sapiens (Human)).